The sequence spans 401 residues: Argininosuccinate synthase (401 aa).

Residue 8–16 (AYSGGLDTS) coordinates ATP. Y87 provides a ligand contact to L-citrulline. ATP is bound at residue G117. 3 residues coordinate L-aspartate: T119, N123, and D124. N123 contacts L-citrulline. L-citrulline is bound by residues R127, S175, E259, and Y271.

It belongs to the argininosuccinate synthase family. Type 1 subfamily. In terms of assembly, homotetramer.

It is found in the cytoplasm. The enzyme catalyses L-citrulline + L-aspartate + ATP = 2-(N(omega)-L-arginino)succinate + AMP + diphosphate + H(+). It participates in amino-acid biosynthesis; L-arginine biosynthesis; L-arginine from L-ornithine and carbamoyl phosphate: step 2/3. This is Argininosuccinate synthase from Arthrobacter sp. (strain FB24).